Here is a 354-residue protein sequence, read N- to C-terminus: Transcription factor BHLH3 (354 aa).

The disordered stretch occupies residues 124 to 143 (VAEEETSGDKALLHGGGGSS). Positions 178–191 (GTPSKNLMAERRRR) are basic motif. One can recognise a bHLH domain in the interval 178–227 (GTPSKNLMAERRRRKRLNDRLSMLRSIVPKISKMDRTSILGDTIDYVKEL). The segment at 192-227 (KRLNDRLSMLRSIVPKISKMDRTSILGDTIDYVKEL) is helix-loop-helix motif.

This sequence belongs to the bHLH protein family. Interacts with LAX1. Post-translationally, phosphorylated by MAPK3 and MAPK6.

It localises to the nucleus. It is found in the cytoplasm. Transcription factor involved in defense responses that functions downstream of RAC1 and upstream of PAL1 and WRKY19 genes. The protein is Transcription factor BHLH3 of Oryza sativa subsp. japonica (Rice).